The following is a 184-amino-acid chain: Ribosome-recycling factor (184 aa).

This sequence belongs to the RRF family.

The protein localises to the cytoplasm. Its function is as follows. Responsible for the release of ribosomes from messenger RNA at the termination of protein biosynthesis. May increase the efficiency of translation by recycling ribosomes from one round of translation to another. The sequence is that of Ribosome-recycling factor from Staphylococcus carnosus (strain TM300).